The following is a 200-amino-acid chain: MQLNVNDAQAIEVSELTFGGEFNETLVHQAVVAYMAGGRQGTKQQKTRSDVAGGGKRPWRQKGTGRARAGTTRGPIWRGGGVTFAARPQDHSQKLNKKMYRAALRSILAELVRSDRLVVVQDFAVEAPKTKDLLNKLNGMGLNDVLIVSDAVDQNLYLAARNLPHVDVRDVQGSDPVSLIAYEKVLITVSAVKKFEELLG.

Positions 38–72 are disordered; that stretch reads GRQGTKQQKTRSDVAGGGKRPWRQKGTGRARAGTT.

This sequence belongs to the universal ribosomal protein uL4 family. In terms of assembly, part of the 50S ribosomal subunit.

Functionally, one of the primary rRNA binding proteins, this protein initially binds near the 5'-end of the 23S rRNA. It is important during the early stages of 50S assembly. It makes multiple contacts with different domains of the 23S rRNA in the assembled 50S subunit and ribosome. In terms of biological role, forms part of the polypeptide exit tunnel. This chain is Large ribosomal subunit protein uL4, found in Pseudomonas entomophila (strain L48).